The primary structure comprises 234 residues: Large ribosomal subunit protein uL1 (234 aa).

The protein belongs to the universal ribosomal protein uL1 family. Part of the 50S ribosomal subunit.

In terms of biological role, binds directly to 23S rRNA. The L1 stalk is quite mobile in the ribosome, and is involved in E site tRNA release. Protein L1 is also a translational repressor protein, it controls the translation of the L11 operon by binding to its mRNA. This is Large ribosomal subunit protein uL1 from Baumannia cicadellinicola subsp. Homalodisca coagulata.